The chain runs to 436 residues: AMSH-like protease (436 aa).

Methionine 1 bears the N-acetylmethionine mark. Phosphoserine occurs at positions 25 and 242. One can recognise an MPN domain in the interval 269 to 397 (VVLPEDLCHK…IFRLTNAGML (129 aa)). Zn(2+)-binding residues include histidine 347, histidine 349, aspartate 360, histidine 362, cysteine 402, histidine 408, and histidine 410. The JAMM motif signature appears at 347-360 (HTHPTQTAFLSSVD).

It belongs to the peptidase M67C family. The cofactor is Zn(2+). In terms of tissue distribution, ubiquitously expressed.

Its activity is regulated as follows. Inhibited by UbV(SP.1), an ubiquitin variant that also inhibits STAMBP. Functionally, zinc metalloprotease that specifically cleaves 'Lys-63'-linked polyubiquitin chains. Acts as a positive regulator of the TORC1 signaling pathway by mediating 'Lys-63'-linked deubiquitination of SESN2, thereby inhibiting SESN2-interaction with the GATOR2 complex. Does not cleave 'Lys-48'-linked polyubiquitin chains. This Homo sapiens (Human) protein is AMSH-like protease.